The sequence spans 519 residues: 3-octaprenyl-4-hydroxybenzoate carboxy-lyase (519 aa).

Asparagine 177 contacts Mn(2+). Residues 180 to 182, 194 to 196, and 199 to 200 contribute to the prenylated FMN site; these read IYR, RWL, and RG. Glutamate 243 provides a ligand contact to Mn(2+). The Proton donor role is filled by aspartate 318.

Belongs to the UbiD family. As to quaternary structure, homohexamer. The cofactor is prenylated FMN. Requires Mn(2+) as cofactor.

It localises to the cell membrane. The catalysed reaction is a 4-hydroxy-3-(all-trans-polyprenyl)benzoate + H(+) = a 2-(all-trans-polyprenyl)phenol + CO2. Its pathway is cofactor biosynthesis; ubiquinone biosynthesis. In terms of biological role, catalyzes the decarboxylation of 3-octaprenyl-4-hydroxy benzoate to 2-octaprenylphenol, an intermediate step in ubiquinone biosynthesis. In Burkholderia pseudomallei (strain 1710b), this protein is 3-octaprenyl-4-hydroxybenzoate carboxy-lyase.